The primary structure comprises 240 residues: 1-(5-phosphoribosyl)-5-[(5-phosphoribosylamino)methylideneamino] imidazole-4-carboxamide isomerase (240 aa).

The active-site Proton acceptor is Asp-8. The Proton donor role is filled by Asp-129.

It belongs to the HisA/HisF family.

It localises to the cytoplasm. It carries out the reaction 1-(5-phospho-beta-D-ribosyl)-5-[(5-phospho-beta-D-ribosylamino)methylideneamino]imidazole-4-carboxamide = 5-[(5-phospho-1-deoxy-D-ribulos-1-ylimino)methylamino]-1-(5-phospho-beta-D-ribosyl)imidazole-4-carboxamide. It participates in amino-acid biosynthesis; L-histidine biosynthesis; L-histidine from 5-phospho-alpha-D-ribose 1-diphosphate: step 4/9. The protein is 1-(5-phosphoribosyl)-5-[(5-phosphoribosylamino)methylideneamino] imidazole-4-carboxamide isomerase of Listeria monocytogenes serotype 4b (strain CLIP80459).